Consider the following 136-residue polypeptide: Large ribosomal subunit protein uL16 (136 aa).

Belongs to the universal ribosomal protein uL16 family. Part of the 50S ribosomal subunit.

Binds 23S rRNA and is also seen to make contacts with the A and possibly P site tRNAs. The chain is Large ribosomal subunit protein uL16 from Shewanella halifaxensis (strain HAW-EB4).